Reading from the N-terminus, the 1722-residue chain is Signal-induced proliferation-associated 1-like protein 2 (1722 aa).

2 disordered regions span residues 1 to 29 (MSDPRPSQAEKHKLGRAASKFKDPSRAMQ) and 45 to 73 (MGPATLNTSSLSEGGGGGGGPANGTPAVP). The segment covering 57-66 (EGGGGGGGPA) has biased composition (gly residues). Phosphoserine is present on residues serine 149, serine 380, and serine 384. Positions 362-404 (ASAASQTPVPVGPAGGCESPLGSKEDLNAKENPDADEGDGKSN) are disordered. Residues 384–403 (SKEDLNAKENPDADEGDGKS) show a composition bias toward basic and acidic residues. Residues 596–813 (LLKLDEQGLS…RTRHEYLKDL (218 aa)) form the Rap-GAP domain. The PDZ domain occupies 951–1027 (EMTLRRNGLG…VKVVIIQPHE (77 aa)). A Phosphoserine modification is found at serine 1030. Disordered stretches follow at residues 1068-1172 (HRVP…DHED), 1197-1246 (ERAL…FGSG), and 1328-1361 (AADGSMGDLSEVSSHSSGSHRSGSPSTHCSKSTG). Composition is skewed to low complexity over residues 1091 to 1103 (LQCQPLLQQAQAA) and 1120 to 1131 (SSPSNQSSSSDP). Residues 1197-1218 (ERALQKDGSCKDSPNKLSHIGD) are compositionally biased toward basic and acidic residues. The span at 1220 to 1237 (SCSSHSSSNTLSSNTSSN) shows a compositional bias: low complexity. Phosphoserine is present on serine 1245. Over residues 1328–1355 (AADGSMGDLSEVSSHSSGSHRSGSPSTH) the composition is skewed to low complexity. Residues serine 1461, serine 1472, serine 1478, serine 1488, serine 1549, serine 1552, and serine 1591 each carry the phosphoserine modification. Residues 1652-1712 (STLTGKVNQL…ATAQLRTFTE (61 aa)) are a coiled coil.

This is Signal-induced proliferation-associated 1-like protein 2 (Sipa1l2) from Rattus norvegicus (Rat).